Here is a 542-residue protein sequence, read N- to C-terminus: Glucose-6-phosphate isomerase 2 (542 aa).

Catalysis depends on glutamate 353, which acts as the Proton donor. Active-site residues include histidine 384 and lysine 505.

The protein belongs to the GPI family.

The protein localises to the cytoplasm. It catalyses the reaction alpha-D-glucose 6-phosphate = beta-D-fructose 6-phosphate. It functions in the pathway carbohydrate biosynthesis; gluconeogenesis. Its pathway is carbohydrate degradation; glycolysis; D-glyceraldehyde 3-phosphate and glycerone phosphate from D-glucose: step 2/4. Its function is as follows. Catalyzes the reversible isomerization of glucose-6-phosphate to fructose-6-phosphate. This chain is Glucose-6-phosphate isomerase 2, found in Cupriavidus pinatubonensis (strain JMP 134 / LMG 1197) (Cupriavidus necator (strain JMP 134)).